The sequence spans 852 residues: MVQKSRNGGVYPGTSGEKKLKVGFVGLDPGAPDSTRDGALLIAGSEAPKRGSVLSKPRTGGAGAGKPPKRNAFYRKLQNFLYNVLERPRGWAFIYHAYVFLLVFSCLVLSVFSTIKEYEKSSEGALYILEIVTIVVFGVEYFVRIWAAGCCCRYRGWRGRLKFARKPFCVIDIMVLIASIAVLAAGSQGNVFATSALRSLRFLQILRMIRMDRRGGTWKLLGSVVYAHSKELVTAWYIGFLCLILASFLVYLAEKGENDHFDTYADALWWGLITLTTIGYGDKYPQTWNGRLLAATFTLIGVSFFALPAGILGSGFALKVQEQHRQKHFEKRRNPAAGLIQSAWRFYATNLSRTDLHSTWQYYERTVTVPMISSQTQTYGASRLIPPLNQLEMLRNLKSKSGLTFRKEPQPEPSPSQKVSLKDRVFSSPRGVAAKGKGSPQAQTVRRSPSADQSLDDSPSKVPKSWSFGDRSRARQAFRIKGAASRQNSEEASLPGEDIVEDNKSCNCEFVTEDLTPGLKVSIRAVCVMRFLVSKRKFKESLRPYDVMDVIEQYSAGHLDMLSRIKSLQSRVDQIVGRGPTITDKDRTKGPAETELPEDPSMMGRLGKVEKQVLSMEKKLDFLVSIYTQRMGIPPAETEAYFGAKEPEPAPPYHSPEDSRDHADKHGCIIKIVRSTSSTGQRKYAAPPVMPPAECPPSTSWQQSHQRHGTSPVGDHGSLVRIPPPPAHERSLSAYSGGNRASTEFLRLEGTPACRPSEAALRDSDTSISIPSVDHEELERSFSGFSISQSKENLNALASCYAAVAPCAKVRPYIAEGESDTDSDLCTPCGPPPRSATGEGPFGDVAWAGPRK.

Residues Met-1 to Gly-90 lie on the Cytoplasmic side of the membrane. The residue at position 52 (Ser-52) is a Phosphoserine; by PKA. The chain crosses the membrane as a helical span at residues Trp-91–Ser-113. Residues Thr-114 to Glu-123 lie on the Extracellular side of the membrane. The helical transmembrane segment at Gly-124–Ile-145 threads the bilayer. Residues Trp-146–Phe-163 are Cytoplasmic-facing. A helical transmembrane segment spans residues Ala-164–Leu-183. Over Ala-184–Ala-196 the chain is Extracellular. Residues Leu-197 to Gly-215 traverse the membrane as a helical; Voltage-sensor segment. Residue Arg-214 participates in a 1,2-diacyl-sn-glycero-3-phospho-(1D-myo-inositol-4,5-bisphosphate) binding. Residues Gly-216–Ala-227 lie on the Cytoplasmic side of the membrane. The mediates interaction with SLC5A3 stretch occupies residues Gly-222 to Gln-323. A helical membrane pass occupies residues His-228 to Ala-253. Lys-230 contacts a 1,2-diacyl-sn-glycero-3-phospho-(1D-myo-inositol-4,5-bisphosphate). The Extracellular portion of the chain corresponds to Glu-254–Thr-263. Residues Tyr-264–Thr-276 constitute an intramembrane region (pore-forming). The Selectivity filter signature appears at Thr-277–Asp-282. The Extracellular portion of the chain corresponds to Thr-277–Thr-287. The helical transmembrane segment at Trp-288–Ser-314 threads the bilayer. Over Gly-315–Lys-852 the chain is Cytoplasmic. The tract at residues Ala-317 to Ser-522 is mediates interaction with calmodulin. Lys-327 serves as a coordination point for a 1,2-diacyl-sn-glycero-3-phospho-(1D-myo-inositol-4,5-bisphosphate). Residues Thr-404–Gly-469 are disordered. The span at Pro-440 to Asp-457 shows a compositional bias: polar residues. Phosphoserine occurs at positions 448, 450, 454, 458, 460, and 489. Disordered stretches follow at residues Gly-579–Ser-601, Gly-643–His-662, and Ile-672–Ser-718. A compositionally biased stretch (basic and acidic residues) spans Thr-583–Ala-592. Position 655 is a phosphoserine (Ser-655). A phosphoserine mark is found at Ser-781 and Ser-783. Residues Glu-818–Lys-852 are disordered.

This sequence belongs to the potassium channel family. KQT (TC 1.A.1.15) subfamily. Kv7.2/KCNQ2 sub-subfamily. As to quaternary structure, heterotetramer with KCNQ3; forms heterotetrameric M-channel responsible for the M-current. Homotetrameric; forms a functional homotetrameric channel resulting in the expression of a small M-current. Interacts with calmodulin; the interaction is calcium-independent, constitutive and participates in the proper assembly of a functional M-channel. May associate with KCNE2. Interacts with IQCJ-SCHIP1. Interacts (via the pore module) with SLC5A3/SMIT1; forms a coregulatory complex that alters ion selectivity, voltage dependence and gating kinetics of the channel. Interacts with AKAP5; the interaction may help KCNQ2 channel complex to retain calcium-bound calmodulin. In terms of processing, KCNQ2/KCNQ3 heteromeric current can be increased by intracellular cyclic AMP, an effect that depends on phosphorylation of Ser-52 in the N-terminal region. Post-translationally, KCNQ2/KCNQ3 are ubiquitinated by NEDD4L. Ubiquitination leads to protein degradation. Degradation induced by NEDD4L is inhibited by USP36. Expressed in brain and sympathetic ganglia. In brain, expressed in cortex, hippocampus, and cerebellum. In sympathetic ganglia, expressed at lower levels in celiac ganglia and superior mesenteric ganglia than in superior cervical ganglia.

The protein localises to the cell membrane. It carries out the reaction K(+)(in) = K(+)(out). The catalysed reaction is Rb(+)(in) = Rb(+)(out). The enzyme catalyses Cs(+)(in) = Cs(+)(out). It catalyses the reaction Na(+)(in) = Na(+)(out). Phosphatidylinositol-4,5-bisphosphate (PIP2) potentiates the activation of KCNQ channels by enhancing the electro-mechanical coupling of the voltage-sensing domain (VSD) and the pore-forming domain (PD). In the closed state of the channel, PIP2 is anchored at the S2-S3 loop; upon channel activation, PIP2 interacts with the S4-S5 linker and is involved in channel gating. Calcium suppresses KCNQ2 and KCNQ2-KCNQ3 channel currents, with calcium-bound calmodulin inducing a change in channel configuration which leads to the reduction of channel affinity for PIP2 and subsequent current suppression. Its function is as follows. Pore-forming subunit of the voltage-gated potassium (Kv) M-channel which is responsible for the M-current, a key controller of neuronal excitability. M-channel is composed of pore-forming subunits KCNQ2 and KCNQ3 assembled as heterotetramers. The native M-current has a slowly activating and deactivating potassium conductance which plays a critical role in determining the subthreshold electrical excitability of neurons as well as the responsiveness to synaptic inputs. M-channel is selectively permeable in vitro to other cations besides potassium, in decreasing order of affinity K(+) &gt; Rb(+) &gt; Cs(+) &gt; Na(+). M-channel association with SLC5A3/SMIT1 alters channel ion selectivity, increasing Na(+) and Cs(+) permeation relative to K(+). Suppressed by activation of the muscarinic acetylcholine receptor CHRM1. This is Potassium voltage-gated channel subfamily KQT member 2 from Rattus norvegicus (Rat).